Here is a 143-residue protein sequence, read N- to C-terminus: Probable FAD-linked sulfhydryl oxidase R368 (143 aa).

The ERV/ALR sulfhydryl oxidase domain maps to 10–104 (GWTFSHAVAL…YPEAIEAIEK (95 aa)). An intrachain disulfide couples cysteine 46 to cysteine 49. The helical transmembrane segment at 117–137 (FFIILIIIGIIVIIYLMYIVF) threads the bilayer.

FAD serves as cofactor.

The protein resides in the membrane. It carries out the reaction 2 R'C(R)SH + O2 = R'C(R)S-S(R)CR' + H2O2. FAD-dependent sulfhydryl oxidase that catalyzes disulfide bond formation. The sequence is that of Probable FAD-linked sulfhydryl oxidase R368 from Acanthamoeba polyphaga mimivirus (APMV).